Here is a 129-residue protein sequence, read N- to C-terminus: Small ribosomal subunit protein uS11 (129 aa).

It belongs to the universal ribosomal protein uS11 family. In terms of assembly, part of the 30S ribosomal subunit. Interacts with proteins S7 and S18. Binds to IF-3.

Functionally, located on the platform of the 30S subunit, it bridges several disparate RNA helices of the 16S rRNA. Forms part of the Shine-Dalgarno cleft in the 70S ribosome. The protein is Small ribosomal subunit protein uS11 of Pseudomonas entomophila (strain L48).